Reading from the N-terminus, the 91-residue chain is MSENTTATTRARRKVREGLVVSDKMDKTVVVEVEDRVKHGLYGKIMRRTSKLKVHDEQNSAGIGDRVLIMETRPLSATKRWRLVEILEKAK.

The protein belongs to the universal ribosomal protein uS17 family. As to quaternary structure, part of the 30S ribosomal subunit.

Its function is as follows. One of the primary rRNA binding proteins, it binds specifically to the 5'-end of 16S ribosomal RNA. The protein is Small ribosomal subunit protein uS17 of Salinispora tropica (strain ATCC BAA-916 / DSM 44818 / JCM 13857 / NBRC 105044 / CNB-440).